The sequence spans 247 residues: PABIR family member 2 (247 aa).

The tract at residues 1-23 (MAQEKMELDLEPDTSYGGTLRRS) is disordered. Residue A2 is modified to N-acetylalanine. 5 positions are modified to phosphoserine: S25, S33, S50, S58, and L63. A disordered region spans residues 82–104 (ISQSWDESLSLSDSDFDKPEKLY). Residues 83-94 (SQSWDESLSLSD) are compositionally biased toward low complexity. T112 bears the Phosphothreonine mark. A phosphoserine mark is found at S115 and S119. R122 is modified (omega-N-methylarginine). Disordered stretches follow at residues 129 to 152 (VSSS…SQSP), 158 to 177 (PSVL…SQPK), and 202 to 230 (DILD…SPVA). Phosphoserine occurs at positions 137 and 141. Basic and acidic residues predominate over residues 166–176 (RKGEMETESQP). Residues 202–216 (DILDGSSSSSGLSSD) are compositionally biased toward low complexity.

The protein belongs to the FAM122 family. In terms of processing, isoform 3 and isoform 4 are phosphorylated on Ser-62 and Ser-64.

The sequence is that of PABIR family member 2 from Homo sapiens (Human).